The following is a 685-amino-acid chain: Kinesin-related protein 11 (685 aa).

Residues 4 to 405 (NISVSVRARP…LKFASRAKKI (402 aa)) enclose the Kinesin motor domain. A disordered region spans residues 36 to 105 (TSLPPPITQP…TTVPASPAPT (70 aa)). Residues 47-105 (SSLPPISTPIKSSSSSSTSTSAGSLKTPLKTPLKTPLKTPLKTNSTTTNTTVPASPAPT) are compositionally biased toward low complexity. 156–163 (GITSSGKT) is a binding site for ATP. Positions 411–488 (VNEILDDKAL…KINNLNKLIL (78 aa)) form a coiled coil. A disordered region spans residues 495–568 (NSASKGGSGS…QSTSSLTIGG (74 aa)). The segment covering 511–520 (RSTFVSPSQN) has biased composition (polar residues). The segment covering 533–565 (PNSFSNLLLQSPSQNNNNNSHISPLSQSTSSLT) has biased composition (low complexity). Positions 574-683 (FESNELIQIQ…LKSKIQEYEV (110 aa)) form a coiled coil.

This sequence belongs to the TRAFAC class myosin-kinesin ATPase superfamily. Kinesin family.

It localises to the cytoplasm. Its subcellular location is the cytoskeleton. Its function is as follows. Microtubule-associated force-producing protein that plays a role in organelle transport. Its motor activity is directed toward the microtubule's plus end. This chain is Kinesin-related protein 11 (kif11), found in Dictyostelium discoideum (Social amoeba).